The chain runs to 280 residues: uncharacterized protein (280 aa).

It belongs to the eukaryotic-type primase small subunit family.

This is an uncharacterized protein from Archaeoglobus fulgidus (strain ATCC 49558 / DSM 4304 / JCM 9628 / NBRC 100126 / VC-16).